The sequence spans 422 residues: Golgi-associated RAB2 interactor protein 2 (422 aa).

Positions 353 to 404 (PVESEANTSKEMKDKTSEEKMPDFQSTALKAEESRSLRTESNTSVLSPHIKS) are disordered. The span at 360–374 (TSKEMKDKTSEEKMP) shows a compositional bias: basic and acidic residues.

Belongs to the GARIN family. As to quaternary structure, interacts with CALM1. In terms of tissue distribution, expressed in spermatozoa (at protein level).

It is found in the cell projection. The protein localises to the cilium. The protein resides in the flagellum. In terms of biological role, seems to play a role in sperm motility. This Homo sapiens (Human) protein is Golgi-associated RAB2 interactor protein 2.